A 100-amino-acid chain; its full sequence is Urease subunit gamma (100 aa).

The protein belongs to the urease gamma subunit family. Heterotrimer of UreA (gamma), UreB (beta) and UreC (alpha) subunits. Three heterotrimers associate to form the active enzyme.

Its subcellular location is the cytoplasm. It carries out the reaction urea + 2 H2O + H(+) = hydrogencarbonate + 2 NH4(+). It functions in the pathway nitrogen metabolism; urea degradation; CO(2) and NH(3) from urea (urease route): step 1/1. Functionally, ureolysis may allow urea to be employed as a nitrogen source for growth and produces ammonia which may protect from killing at low pH. This chain is Urease subunit gamma, found in Streptococcus salivarius (strain 57.I).